The primary structure comprises 434 residues: Tol-Pal system protein TolB (434 aa).

The N-terminal stretch at 1–28 (MQQTCKRKIWMQISVALVTSLWMISAQA) is a signal peptide.

It belongs to the TolB family. The Tol-Pal system is composed of five core proteins: the inner membrane proteins TolA, TolQ and TolR, the periplasmic protein TolB and the outer membrane protein Pal. They form a network linking the inner and outer membranes and the peptidoglycan layer.

The protein resides in the periplasm. Functionally, part of the Tol-Pal system, which plays a role in outer membrane invagination during cell division and is important for maintaining outer membrane integrity. The protein is Tol-Pal system protein TolB of Alcanivorax borkumensis (strain ATCC 700651 / DSM 11573 / NCIMB 13689 / SK2).